Here is a 480-residue protein sequence, read N- to C-terminus: tRNA-2-methylthio-N(6)-dimethylallyladenosine synthase (480 aa).

Positions 2–118 (NRVHIKTYGC…VPGYLDNLRA (117 aa)) constitute an MTTase N-terminal domain. Positions 11, 47, and 81 each coordinate [4Fe-4S] cluster. Residues 145-169 (DHLLPQDSDSDSQPSTLNSQLRGAA) form a disordered region. The span at 149 to 159 (PQDSDSDSQPS) shows a compositional bias: low complexity. Residues 171–405 (PPPQITAFVS…LELLRQNSER (235 aa)) enclose the Radical SAM core domain. [4Fe-4S] cluster-binding residues include Cys185, Cys189, and Cys192. Residues 408–470 (ALLLDTVEEV…VSTLYGELML (63 aa)) form the TRAM domain.

The protein belongs to the methylthiotransferase family. MiaB subfamily. Monomer. [4Fe-4S] cluster serves as cofactor.

It localises to the cytoplasm. The catalysed reaction is N(6)-dimethylallyladenosine(37) in tRNA + (sulfur carrier)-SH + AH2 + 2 S-adenosyl-L-methionine = 2-methylsulfanyl-N(6)-dimethylallyladenosine(37) in tRNA + (sulfur carrier)-H + 5'-deoxyadenosine + L-methionine + A + S-adenosyl-L-homocysteine + 2 H(+). Its function is as follows. Catalyzes the methylthiolation of N6-(dimethylallyl)adenosine (i(6)A), leading to the formation of 2-methylthio-N6-(dimethylallyl)adenosine (ms(2)i(6)A) at position 37 in tRNAs that read codons beginning with uridine. The sequence is that of tRNA-2-methylthio-N(6)-dimethylallyladenosine synthase from Opitutus terrae (strain DSM 11246 / JCM 15787 / PB90-1).